The following is a 675-amino-acid chain: MAKHGADEPSSRSGSPDREGRASEDRSLLHQRLAVRELIDTEVSYLHMLQLCASDIRSRLQQLPQGDLDVLFSNIDDIIKVNSRFLHDLQETASKEEEQVQLVGNIFLEFQEELEQVYKVYCASYDQALLLVDTYRKEPELQRHIQGIVEAVVPQAGSSGLSFLLVIPLQRITRYPLLLQKILENTVPDASAYPVLQRAVSALQDVNTNINEYKMRKEVASKYTKVEQLTLRERLARINTHTLSKKTTRLSQLLKQEAGLIPRTEDKEFDDLEERFQWVSLCVTELKNNVAAYLDNLQAFLYFRPHEYNLDIPEGPAVQYCNLARDLHLEAFLKFKQRLEGLVWQPLCSLAKALLGPQNLIKKRLDKLLDFERVEEKLLEVGSVTYQEEAARHTYQALNSLLVAELPQFNQLVMQWLGQIMCTFVTLQRDLAKQVLQRAEGSMAQLPHHHVPEPAFRKLVEDALGRTSNQLRSFQETFEKVQPPPTTQPLLPGSERQVQALLSRYGPGKLYQVTSNISGTGTLDLTLPRGQIVAILQNKDTKGNSGRWLVDTGGHRGYVPAGKLQLYHVVPSAEELRRQAGLNKDPRCLTPEPSPALVPSIPTMNQVIAAYPFVARSSHEVSLQAGQPVTILEAQDKKGNPEWSLVEVNGQRGYVPSGFLARARSPVLWGWSLPS.

Residues 1 to 26 (MAKHGADEPSSRSGSPDREGRASEDR) are disordered. The region spanning 30-213 (HQRLAVRELI…QDVNTNINEY (184 aa)) is the DH domain. A BAR domain is found at 254 to 455 (LKQEAGLIPR…LPHHHVPEPA (202 aa)). SH3 domains are found at residues 506-569 (GPGK…LYHV) and 602-665 (PTMN…RARS).

May act as a guanine nucleotide exchange factor (GEF). The protein is Rho guanine nucleotide exchange factor 37 (ARHGEF37) of Homo sapiens (Human).